The chain runs to 601 residues: Dual specificity tyrosine-phosphorylation-regulated kinase 2 (601 aa).

The segment at 1–24 (MLTRKPSAAAPAAYPTGRGGDSAV) is disordered. Phosphoserine is present on serine 30. Threonine 106 carries the post-translational modification Phosphothreonine; by ATM. The Nuclear localization signal motif lies at 189–191 (KKR). The Protein kinase domain occupies 222 to 535 (YEVLKVIGKG…PGQALRHPWL (314 aa)). ATP-binding positions include 228 to 236 (IGKGSFGQV), lysine 251, and 301 to 304 (FELL). Aspartate 348 (proton acceptor) is an active-site residue. The residue at position 381 (threonine 381) is a Phosphothreonine; by MAP3K10. Residue tyrosine 382 is modified to Phosphotyrosine; by autocatalysis. Serine 442 carries the post-translational modification Phosphoserine; by ATM. Residue serine 449 is modified to Phosphoserine; by MAP3K10.

It belongs to the protein kinase superfamily. CMGC Ser/Thr protein kinase family. MNB/DYRK subfamily. In terms of assembly, component of an E3 ligase complex containing DYRK2, EDD/UBR5, DDB1 and DCAF1 (EDVP complex). Interacts directly with EDD/UBR5, DDB1 and DCAF1. Interacts with SIAH2 and MDM2. Interacts with MAP3K10 and NFATC1. May also interact with CCNL2. Mg(2+) is required as a cofactor. The cofactor is Mn(2+). Autophosphorylates cotranslationally on the second tyrosine residue in the Tyr-X-Tyr motif in the activation loop, but once mature, does not have any protein tyrosine kinase activity. Phosphorylated at Thr-106 and Ser-442 by ATM in response to genotoxic stress. Post-translationally, under normal conditions, polyubiquitinated in the nucleus by MDM2, leading to its proteasomal degradation. Phosphorylation on Thr-106 and Ser-442 by ATM in response to genotoxic stress disrupts MDM2 binding and prevents MDM2-mediated ubiquitination and subsequent proteasomal degradation. Polyubiquitinated by SIAH2, leading to its proteasomal degradation. Polyubiquitinated by SIAH2 occurs under normal conditions, and is enhanced in response to hypoxia. As to expression, testis, after the onset of spermatogenesis.

It is found in the cytoplasm. The protein localises to the nucleus. The enzyme catalyses L-seryl-[protein] + ATP = O-phospho-L-seryl-[protein] + ADP + H(+). It carries out the reaction L-threonyl-[protein] + ATP = O-phospho-L-threonyl-[protein] + ADP + H(+). The catalysed reaction is L-tyrosyl-[protein] + ATP = O-phospho-L-tyrosyl-[protein] + ADP + H(+). With respect to regulation, activated by autophosphorylation on the second tyrosine residue in the Tyr-X-Tyr motif in the activation loop. Inhibited by acridine analogs, purvalanol, and barely by harmine. Inhibited by leucettine and leucettine derivatives. Serine/threonine-protein kinase involved in the regulation of the mitotic cell cycle, cell proliferation, apoptosis, organization of the cytoskeleton and neurite outgrowth. Functions in part via its role in ubiquitin-dependent proteasomal protein degradation. Functions downstream of ATM and phosphorylates p53/TP53 at 'Ser-46', and thereby contributes to the induction of apoptosis in response to DNA damage. Phosphorylates NFATC1, and thereby inhibits its accumulation in the nucleus and its transcription factor activity. Phosphorylates EIF2B5 at 'Ser-544', enabling its subsequent phosphorylation and inhibition by GSK3B. Likewise, phosphorylation of NFATC1, CRMP2/DPYSL2 and CRMP4/DPYSL3 promotes their subsequent phosphorylation by GSK3B. May play a general role in the priming of GSK3 substrates. Inactivates GYS1 by phosphorylation at 'Ser-641', and potentially also a second phosphorylation site, thus regulating glycogen synthesis. Mediates EDVP E3 ligase complex formation and is required for the phosphorylation and subsequent degradation of KATNA1. Phosphorylates TERT at 'Ser-457', promoting TERT ubiquitination by the EDVP complex. Phosphorylates SIAH2, and thereby increases its ubiquitin ligase activity. Promotes the proteasomal degradation of MYC and JUN, and thereby regulates progress through the mitotic cell cycle and cell proliferation. Promotes proteasomal degradation of GLI2 and GLI3, and thereby plays a role in smoothened and sonic hedgehog signaling. Plays a role in cytoskeleton organization and neurite outgrowth via its phosphorylation of DCX and DPYSL2. Phosphorylates CRMP2/DPYSL2, CRMP4/DPYSL3, DCX, EIF2B5, EIF4EBP1, GLI2, GLI3, GYS1, JUN, MDM2, MYC, NFATC1, p53/TP53, TAU/MAPT and KATNA1. Can phosphorylate histone H1, histone H3 and histone H2B (in vitro). Can phosphorylate CARHSP1 (in vitro). This Homo sapiens (Human) protein is Dual specificity tyrosine-phosphorylation-regulated kinase 2 (DYRK2).